Consider the following 153-residue polypeptide: Pheromone-binding protein Gp-9 (153 aa).

The N-terminal stretch at 1–19 is a signal peptide; sequence MKTFVLHIFIFAFVAFASA. Intrachain disulfides connect Cys-37-Cys-77, Cys-73-Cys-129, and Cys-118-Cys-138.

It belongs to the PBP/GOBP family. As to quaternary structure, homodimer.

It is found in the secreted. Its function is as follows. Colony queen number, a major feature of social organization, is associated with worker genotype for Gp-9. Colonies are headed by either a single reproductive queen (monogyne form) or multiple queens (polygyne form). Differences in worker Gp-9 genotypes between social forms may cause differences in workers' abilities to recognize queens and regulate their numbers. This Solenopsis amblychila (Desert fire ant) protein is Pheromone-binding protein Gp-9.